The following is a 574-amino-acid chain: Proline--tRNA ligase (574 aa).

Belongs to the class-II aminoacyl-tRNA synthetase family. ProS type 1 subfamily. As to quaternary structure, homodimer.

The protein resides in the cytoplasm. The catalysed reaction is tRNA(Pro) + L-proline + ATP = L-prolyl-tRNA(Pro) + AMP + diphosphate. In terms of biological role, catalyzes the attachment of proline to tRNA(Pro) in a two-step reaction: proline is first activated by ATP to form Pro-AMP and then transferred to the acceptor end of tRNA(Pro). As ProRS can inadvertently accommodate and process non-cognate amino acids such as alanine and cysteine, to avoid such errors it has two additional distinct editing activities against alanine. One activity is designated as 'pretransfer' editing and involves the tRNA(Pro)-independent hydrolysis of activated Ala-AMP. The other activity is designated 'posttransfer' editing and involves deacylation of mischarged Ala-tRNA(Pro). The misacylated Cys-tRNA(Pro) is not edited by ProRS. The protein is Proline--tRNA ligase of Ralstonia pickettii (strain 12J).